The chain runs to 87 residues: MTKVFCKKYHQELDAIPFQPLPGELGKKIHNEISNKAWQAWLAHQTILINEYRLNLIEPKAKEFLKEEMHKFLFEGKEEKPEQFSEI.

The protein belongs to the Fe(2+)-trafficking protein family.

Its function is as follows. Could be a mediator in iron transactions between iron acquisition and iron-requiring processes, such as synthesis and/or repair of Fe-S clusters in biosynthetic enzymes. The protein is Probable Fe(2+)-trafficking protein of Francisella tularensis subsp. novicida (strain U112).